A 310-amino-acid chain; its full sequence is HMG box-containing protein C28F2.11 (310 aa).

The segment covering 69 to 95 (ESPSKKATSPKKATPAAVAPVEATSAV) has biased composition (low complexity). The interval 69 to 310 (ESPSKKATSP…TTPPTAKVAN (242 aa)) is disordered. Ser-70 carries the post-translational modification Phosphoserine. Phosphothreonine is present on Thr-105. The HMG box DNA-binding region spans 117 to 187 (PKRPPSAYNL…AYEEEMAAYN (71 aa)). Basic and acidic residues-rich tracts occupy residues 131–178 (QRSE…LREA) and 200–226 (VTAE…DFSE). Phosphoserine occurs at positions 161, 214, and 215. Phosphothreonine is present on residues Thr-217 and Thr-237. A compositionally biased stretch (polar residues) spans 255–268 (STVPTSNVEPVSQP). Residues Ser-271, Ser-278, Ser-294, Ser-295, and Ser-297 each carry the phosphoserine modification. Phosphothreonine is present on residues Thr-302 and Thr-305.

It is found in the cytoplasm. The sequence is that of HMG box-containing protein C28F2.11 from Schizosaccharomyces pombe (strain 972 / ATCC 24843) (Fission yeast).